The primary structure comprises 31 residues: Scolopendra 20566.01 Da toxin (31 aa).

The protein belongs to the CRISP family. Venom allergen 5-like subfamily. Post-translationally, contains 3 disulfide bonds. As to expression, expressed by the venom gland.

It is found in the secreted. The sequence is that of Scolopendra 20566.01 Da toxin from Scolopendra angulata (Barbados giant red centipede).